We begin with the raw amino-acid sequence, 186 residues long: UPF0301 protein NTHI0415 (186 aa).

The protein belongs to the UPF0301 (AlgH) family.

In Haemophilus influenzae (strain 86-028NP), this protein is UPF0301 protein NTHI0415.